A 690-amino-acid polypeptide reads, in one-letter code: Eukaryotic translation initiation factor 3 subunit B (690 aa).

Positions 1–11 (MAKKKSEEHSS) are enriched in basic and acidic residues. The interval 1–33 (MAKKKSEEHSSADANDSDYQEEPNFDDPPNFVD) is disordered. A compositionally biased stretch (acidic residues) spans 15 to 25 (NDSDYQEEPNF). In terms of domain architecture, RRM spans 57 to 141 (SVVVVDNIPK…HTFAVNLFTD (85 aa)). 5 WD repeats span residues 207-246 (TRER…KIQK), 293-331 (DGMS…LLDL), 334-369 (IKIP…TLME), 442-484 (EIRE…KPSL), and 530-575 (PDHF…IKRT). A coiled-coil region spans residues 614-645 (QKDRLRLTRASKELLEKRSQLRETFMEYRNKR).

The protein belongs to the eIF-3 subunit B family. In terms of assembly, component of the eukaryotic translation initiation factor 3 (eIF-3) complex. The eIF-3 complex interacts with pix. Interacts with mxt.

It localises to the cytoplasm. Functionally, RNA-binding component of the eukaryotic translation initiation factor 3 (eIF-3) complex, which is involved in protein synthesis of a specialized repertoire of mRNAs and, together with other initiation factors, stimulates binding of mRNA and methionyl-tRNAi to the 40S ribosome. The eIF-3 complex specifically targets and initiates translation of a subset of mRNAs involved in cell proliferation. The sequence is that of Eukaryotic translation initiation factor 3 subunit B from Drosophila willistoni (Fruit fly).